Consider the following 269-residue polypeptide: Hydroxyethylthiazole kinase (269 aa).

Met46 contributes to the substrate binding site. Positions 122 and 168 each coordinate ATP. Gly195 is a substrate binding site.

The protein belongs to the Thz kinase family. Mg(2+) serves as cofactor.

The catalysed reaction is 5-(2-hydroxyethyl)-4-methylthiazole + ATP = 4-methyl-5-(2-phosphooxyethyl)-thiazole + ADP + H(+). Its pathway is cofactor biosynthesis; thiamine diphosphate biosynthesis; 4-methyl-5-(2-phosphoethyl)-thiazole from 5-(2-hydroxyethyl)-4-methylthiazole: step 1/1. In terms of biological role, catalyzes the phosphorylation of the hydroxyl group of 4-methyl-5-beta-hydroxyethylthiazole (THZ). This Geobacillus kaustophilus (strain HTA426) protein is Hydroxyethylthiazole kinase.